We begin with the raw amino-acid sequence, 152 residues long: Cytochrome c-type biogenesis CcmH-like mitochondrial protein (152 aa).

Residues 1–83 (MATEEDVKQR…ILYTPKFDLQ (83 aa)) lie on the Mitochondrial intermembrane side of the membrane. 2 residues coordinate heme: C26 and C29. A helical membrane pass occupies residues 84–104 (TAAIWLSPVIVGGVAAGVWAY). Residues 105–152 (KKHRQRTNVHIMALNLVRGVPLTPREKETMLDVLTPPPPANKWWWPGK) are Mitochondrial matrix-facing.

Belongs to the CcmH/CycL/Ccl2/NrfF family.

The protein resides in the mitochondrion inner membrane. Its function is as follows. Plays a role in mitochondrial cytochrome c maturation. Probable component of a heme lyase complex involved in the reduction of apocytochrome c. The polypeptide is Cytochrome c-type biogenesis CcmH-like mitochondrial protein (Oryza sativa subsp. indica (Rice)).